The chain runs to 462 residues: MSYITVIDDKLYSSLRKLVGYSPLYLFNDKGDFVEVMKNSEFRFLIPSGYFSNSNVPLYGLTFSYGRNWMKDRQKIILPELYPIQRRVIEEIILQFSRKCKEKRPLYTTLHLACGFGKTVTASYLIGTHKKNAVVSVPNKLILKQWENSISSLKVSYYVSYEGVSKLLKVLTSKSFSILVVVDKHFSNKEFCELVYENYDVFILDEAHIYNLMNESIMTSFLCYYPPRICYFLTATPRQQNAVYCNSIINFIKFSPLQKILYVIRELYNEYTNPSIRAHVSQLQTTANKYHLYTEKALAEDIHRNKTIVDKIIETFKTNQGNRILVITKLRNHMIIIYNDLRKVLSDKVYLGDAQKKSTTDMIKELRTIDNFILVSTLHYAGTGLDIPNLDSLFICNTVMNSMQSEQVMGRICRDTGSSPTRSIYLFINTSIKEIKSLVGVFTQRFAQQATKLGFREVSQMA.

Residues 99–255 (KCKEKRPLYT…NSIINFIKFS (157 aa)) form the Helicase ATP-binding domain. 112–119 (LACGFGKT) contacts ATP. The DEAH box signature appears at 205–208 (DEAH). Positions 308 to 459 (IVDKIIETFK…ATKLGFREVS (152 aa)) constitute a Helicase C-terminal domain.

It belongs to the helicase family. Poxviruses subfamily. Interacts with G2. Might be part of a transcription complex composed at least of G2, A18, and H5.

It is found in the virion. Its function is as follows. DNA helicase which seems to act as a postreplicative transcription termination factor. Involved in ATP-dependent release of nascent RNA. Forms a stable complex with single-stranded DNA, and to a lesser extent RNA. This Vertebrata (FPV) protein is Transcript termination protein A18.